The following is a 189-amino-acid chain: Tumor protein p53-inducible protein 11 (189 aa).

The Cytoplasmic segment spans residues Met-1–Arg-63. At Ser-14 the chain carries Phosphoserine. The chain crosses the membrane as a helical span at residues Val-64–Pro-84. Over Asp-85–Gly-108 the chain is Extracellular. Residues Ala-109 to Ile-129 form a helical membrane-spanning segment. Residue Arg-130 is a topological domain, cytoplasmic. Residues Trp-131 to Leu-151 form a helical membrane-spanning segment. Residues Ala-152–Gly-155 lie on the Extracellular side of the membrane. Residues Leu-156–Ile-176 form a helical membrane-spanning segment. The Cytoplasmic portion of the chain corresponds to Tyr-177–Val-189.

Its subcellular location is the membrane. This is Tumor protein p53-inducible protein 11 (Trp53i11) from Mus musculus (Mouse).